Reading from the N-terminus, the 743-residue chain is NAD(P)H-quinone oxidoreductase subunit 5, chloroplastic (743 aa).

The next 16 membrane-spanning stretches (helical) occupy residues 9–29, 40–60, 89–109, 125–145, 147–167, 185–205, 219–239, 258–278, 284–304, 327–347, 354–374, 396–416, 425–445, 551–571, 607–627, and 723–743; these read WIIPFLPLPVPMLIGLGLLLF, WAFQSVLLLSIVMIFSMNLSI, IDPLTSIMSILITTVGIMVLI, FAYMSFFSTSMLGLVTSSNLI, IYIFWELVGMCSYLLIGFWFT, GDFGLLLGILGFYWITGSFEF, NEVNFLFVTLCAVLLFAGAIA, TPISALIHAATMVAAGIFLVA, FIVIPHIMNLISLIGIITVFF, LGYMMLALGMGSYRSALFHLI, ALLFLGSGSVIHSMETLVGYC, NSFLLGTLSLCGIPPLACFWS, WLYSPIFAIIAWSTAGLTAFY, LFPILILILFTLFVGFLGIPF, VFSVSIASFGIYIAFFLYKPV, and YLFFYFSYVSIFLFIYYFLNL.

Belongs to the complex I subunit 5 family. As to quaternary structure, NDH is composed of at least 16 different subunits, 5 of which are encoded in the nucleus.

It is found in the plastid. Its subcellular location is the chloroplast thylakoid membrane. It catalyses the reaction a plastoquinone + NADH + (n+1) H(+)(in) = a plastoquinol + NAD(+) + n H(+)(out). The enzyme catalyses a plastoquinone + NADPH + (n+1) H(+)(in) = a plastoquinol + NADP(+) + n H(+)(out). In terms of biological role, NDH shuttles electrons from NAD(P)H:plastoquinone, via FMN and iron-sulfur (Fe-S) centers, to quinones in the photosynthetic chain and possibly in a chloroplast respiratory chain. The immediate electron acceptor for the enzyme in this species is believed to be plastoquinone. Couples the redox reaction to proton translocation, and thus conserves the redox energy in a proton gradient. The polypeptide is NAD(P)H-quinone oxidoreductase subunit 5, chloroplastic (ndhF) (Ambrosia trifida (Giant ragweed)).